The chain runs to 181 residues: Large ribosomal subunit protein uL10 (181 aa).

This sequence belongs to the universal ribosomal protein uL10 family. Part of the ribosomal stalk of the 50S ribosomal subunit. The N-terminus interacts with L11 and the large rRNA to form the base of the stalk. The C-terminus forms an elongated spine to which L12 dimers bind in a sequential fashion forming a multimeric L10(L12)X complex.

Its function is as follows. Forms part of the ribosomal stalk, playing a central role in the interaction of the ribosome with GTP-bound translation factors. This chain is Large ribosomal subunit protein uL10, found in Trichormus variabilis (strain ATCC 29413 / PCC 7937) (Anabaena variabilis).